Consider the following 183-residue polypeptide: MDIDPYKEFGASVELLSFLPSDFFPSIRDLLDTASALYREALESPEHCSPHHTALRQAILCWGELMNLATWVGSNLEDPASRELVVSYVNVNMGLKIRQLLWFHISCLTFGRETVLEYLVSFGVWIRTPPAYRPPNAPILSTLPETTVVRRRGRSPRRRTPSPRRRRSQSPRRRRSQSRESQC.

Residues 136-183 are disordered; that stretch reads NAPILSTLPETTVVRRRGRSPRRRTPSPRRRRSQSPRRRRSQSRESQC. Over residues 149 to 176 the composition is skewed to basic residues; it reads VRRRGRSPRRRTPSPRRRRSQSPRRRRS. Phosphoserine; by host occurs at positions 155, 162, and 170. One copy of the 1; half-length repeat lies at 155-161; it reads SPRRRTP. Positions 155–177 are 3 X 8 AA repeats of S-P-R-R-R-[PR]-S-Q; that stretch reads SPRRRTPSPRRRRSQSPRRRRSQ. The short motif at 158-175 is the Bipartite nuclear localization signal element; the sequence is RRTPSPRRRRSQSPRRRR. Repeat copies occupy residues 162–169 and 170–177. The segment at 177–183 is RNA binding; it reads QSRESQC.

This sequence belongs to the orthohepadnavirus core antigen family. Homodimerizes, then multimerizes. Interacts with cytosol exposed regions of viral L glycoprotein present in the reticulum-to-Golgi compartment. Interacts with human FLNB. Phosphorylated form interacts with host importin alpha; this interaction depends on the exposure of the NLS, which itself depends upon genome maturation and/or phosphorylation of the capsid protein. Interacts with host NUP153. In terms of processing, phosphorylated by host SRPK1, SRPK2, and maybe protein kinase C or GAPDH. Phosphorylation is critical for pregenomic RNA packaging. Protein kinase C phosphorylation is stimulated by HBx protein and may play a role in transport of the viral genome to the nucleus at the late step during the viral replication cycle.

Its subcellular location is the virion. The protein localises to the host cytoplasm. Self assembles to form an icosahedral capsid. Most capsids appear to be large particles with an icosahedral symmetry of T=4 and consist of 240 copies of capsid protein, though a fraction forms smaller T=3 particles consisting of 180 capsid proteins. Entering capsids are transported along microtubules to the nucleus. Phosphorylation of the capsid is thought to induce exposure of nuclear localization signal in the C-terminal portion of the capsid protein that allows binding to the nuclear pore complex via the importin (karyopherin-) alpha and beta. Capsids are imported in intact form through the nuclear pore into the nuclear basket, where it probably binds NUP153. Only capsids that contain the mature viral genome can release the viral DNA and capsid protein into the nucleoplasm. Immature capsids get stuck in the basket. Capsids encapsulate the pre-genomic RNA and the P protein. Pre-genomic RNA is reverse-transcribed into DNA while the capsid is still in the cytoplasm. The capsid can then either be directed to the nucleus, providing more genomes for transcription, or bud through the endoplasmic reticulum to provide new virions. The polypeptide is Capsid protein (Hepatitis B virus genotype B2 (isolate Indonesia/pIDW420/1988) (HBV-B)).